A 272-amino-acid chain; its full sequence is MARLAAFDMDGTLLMPDHHLGEKTLSTLARLRERDITLTFATGRHALEMQHILGALSLDAYLITGNGTRVHSLEGELLHRDDLPADVAELVLYQQWDTRASMHIFNDDGWFTGKEIPALLQAFVYSGFRYQIIDVKKMPLGSVTKICFCGDHDDLTRLQIQLYEALGERAHLCFSATDCLEVLPVGCNKGAALTVLTQHLGLSLRDCMAFGDAMNDREMLVSVGSGFIMGNAMPQLRAELPHLPVIGHCRNQAVSHYLTHWLDYPHLPYSPE.

Asp8 serves as the catalytic Nucleophile. Residues Asp8, Asp10, and Asp212 each coordinate Mg(2+).

It belongs to the HAD-like hydrolase superfamily. Cof family. The cofactor is Mg(2+).

The enzyme catalyses 4-amino-2-methyl-5-(diphosphooxymethyl)pyrimidine + H2O = 4-amino-2-methyl-5-(phosphooxymethyl)pyrimidine + phosphate + H(+). In terms of biological role, catalyzes the hydrolysis of 4-amino-2-methyl-5-hydroxymethylpyrimidine pyrophosphate (HMP-PP) to 4-amino-2-methyl-5-hydroxymethylpyrimidine phosphate (HMP-P). This Escherichia coli (strain K12 / MC4100 / BW2952) protein is HMP-PP phosphatase.